The chain runs to 192 residues: uncharacterized protein (192 aa).

The region spanning 29–160 (HRQAAVLIPI…PLDIYRRGDS (132 aa)) is the Nudix hydrolase domain. A Nudix box motif is present at residues 67 to 89 (GAVDDTDTSVIAAALREAEEEVA). Mg(2+) contacts are provided by Glu83 and Glu87.

The protein belongs to the Nudix hydrolase family. PCD1 subfamily. Mn(2+) is required as a cofactor. It depends on Mg(2+) as a cofactor.

In terms of biological role, probably mediates the hydrolysis of some nucleoside diphosphate derivatives. This is an uncharacterized protein from Escherichia coli O7:K1 (strain IAI39 / ExPEC).